Here is a 3184-residue protein sequence, read N- to C-terminus: Cilia and flagella-associated protein 47 (3184 aa).

The 123-residue stretch at 1729 to 1851 (SDSERILLSW…LCVYLYERLP (123 aa)) folds into the Calponin-homology (CH) domain. The disordered stretch occupies residues 2491–2514 (RDEEESQEETDTEKDFSSQETPSD). Residues 2493–2502 (EEESQEETDT) are compositionally biased toward acidic residues.

As to quaternary structure, interacts with CFAP65. In terms of tissue distribution, highly expressed in spermatzoa (at protein level).

Its subcellular location is the cytoplasm. The protein localises to the cytoskeleton. The protein resides in the flagellum basal body. In terms of biological role, plays a role in flagellar formation and sperm motility. The polypeptide is Cilia and flagella-associated protein 47 (Mus musculus (Mouse)).